We begin with the raw amino-acid sequence, 196 residues long: Imidazoleglycerol-phosphate dehydratase (196 aa).

Belongs to the imidazoleglycerol-phosphate dehydratase family.

It localises to the cytoplasm. The enzyme catalyses D-erythro-1-(imidazol-4-yl)glycerol 3-phosphate = 3-(imidazol-4-yl)-2-oxopropyl phosphate + H2O. The protein operates within amino-acid biosynthesis; L-histidine biosynthesis; L-histidine from 5-phospho-alpha-D-ribose 1-diphosphate: step 6/9. The polypeptide is Imidazoleglycerol-phosphate dehydratase (Clostridium botulinum (strain ATCC 19397 / Type A)).